Reading from the N-terminus, the 491-residue chain is Peptidoglycan D,D-transpeptidase PbpA (491 aa).

Over M1–V8 the chain is Cytoplasmic. The chain crosses the membrane as a helical; Signal-anchor for type II membrane protein span at residues A9–F29. At A30–S491 the chain is on the periplasmic side. The segment at G160–A484 is transpeptidase. Catalysis depends on S222, which acts as the Acyl-ester intermediate.

The protein belongs to the transpeptidase family.

The protein localises to the cell inner membrane. The enzyme catalyses Preferential cleavage: (Ac)2-L-Lys-D-Ala-|-D-Ala. Also transpeptidation of peptidyl-alanyl moieties that are N-acyl substituents of D-alanine.. It functions in the pathway cell wall biogenesis; peptidoglycan biosynthesis. Its function is as follows. Transpeptidase that catalyzes cross-linking of the peptidoglycan cell wall. Required for the regulation of cell length. In Mycolicibacterium smegmatis (strain ATCC 700084 / mc(2)155) (Mycobacterium smegmatis), this protein is Peptidoglycan D,D-transpeptidase PbpA (pbpA).